The chain runs to 443 residues: Major royal jelly protein 7 (443 aa).

The first 17 residues, 1 to 17 (MTRWLFMVACLGIACQG), serve as a signal peptide directing secretion. 4 N-linked (GlcNAc...) asparagine glycosylation sites follow: asparagine 145, asparagine 161, asparagine 178, and asparagine 321.

It belongs to the major royal jelly protein family. As to expression, found in and secreted from the hypopharyngeal glands of the worker honey bee (at protein level); expression peaks at 12 days post eclosion. Expressed in the brains of adult worker bees peaking at 12 days post eclosion (at protein level). Expressed in the spermatheca of adult queen bees (at protein level); Expression levels are higher in mated queens than in virgin queens.

The protein localises to the secreted. Component of royal jelly, a substance produced in the hypopharyngeal gland containing proteins, free amino acids, fatty acids, sugars and other nutrients, which is fed to developing larvae by worker nurse bees. All larvae are fed some royal jelly (also known as worker jelly) early in their development but it forms the principal source of nutrition for larvae destined to become queen bees. Produced in the spermatheca of adult queen bees, along with other major royal jelly proteins, where it may act as a nutrient supply for sperm stored by mated queens, or be involved in energy metabolism. The protein is Major royal jelly protein 7 of Apis mellifera (Honeybee).